We begin with the raw amino-acid sequence, 528 residues long: Cytochrome P450 monooxygenase ppsD (528 aa).

Residues leucine 2 to leucine 21 traverse the membrane as a helical segment. N-linked (GlcNAc...) asparagine glycosylation is present at asparagine 137. A heme-binding site is contributed by cysteine 441. 2 N-linked (GlcNAc...) asparagine glycosylation sites follow: asparagine 450 and asparagine 463.

This sequence belongs to the cytochrome P450 family. It depends on heme as a cofactor.

Its subcellular location is the membrane. Its function is as follows. Cytochrome P450 monooxygenase; part of the gene cluster that mediates the biosynthesis of 2,4'-dihydroxy-3'-methoxypropiophenone. The first step of the pathway is the conversion of acetate into acetyl-CoA by the acyl-CoA ligase ppsA. Acetyl-CoA is then used as a starter unit by the polyketide synthase ppsB and condensed with 4 malonyl-CoA unit to produce the pentaketide backbone. During polyketide extension, the polykedite chain is probably reduced and dehydrated by the KR and PT domains, respectively. O-methylation seems to be catalyzed by an unknown methyltransferase rather than by the CMeT domain of ppsB. Two hydroxylations and one further decarboxylation step catalyzed by yet unknown enzymes are then required to yield 4'-hydroxy-3'-methoxypropiophenone. PpsC functions as a carrier protein to transport 4'-hydroxy-3'-methoxypropiophenone to a specific cell compartment in which 4'-hydroxy-3'-methoxypropiophenone is hydroxylated to 2,4'-dihydroxy-3'-methoxypropiophenone by a still to be identified enzyme. The polypeptide is Cytochrome P450 monooxygenase ppsD (Aspergillus oryzae (strain ATCC 42149 / RIB 40) (Yellow koji mold)).